A 624-amino-acid polypeptide reads, in one-letter code: Coagulation factor XI (624 aa).

The first 18 residues, 1–18 (MTSLHQVLYFIFFASVSS), serve as a signal peptide directing secretion. Apple domains are found at residues 20–103 (CVTK…FKQC), 110–193 (CSKD…LKSC), 200–283 (CIRD…LQHC), and 291–376 (CHPS…LRLC). 17 disulfides stabilise this stretch: Cys20/Cys103, Cys46/Cys76, Cys50/Cys56, Cys110/Cys193, Cys136/Cys165, Cys140/Cys146, Cys200/Cys283, Cys226/Cys255, Cys230/Cys236, Cys291/Cys376, Cys317/Cys348, Cys321/Cys327, Cys382/Cys499, Cys415/Cys431, Cys513/Cys580, Cys544/Cys559, and Cys570/Cys598. N-linked (GlcNAc...) asparagine glycosylation is found at Asn90 and Asn126. A glycan (N-linked (GlcNAc...) asparagine) is linked at Asn297. A Peptidase S1 domain is found at 390–622 (VVGGAASVHG…YVDWILEKTQ (233 aa)). His430 (charge relay system) is an active-site residue. Asn449 is a glycosylation site (N-linked (GlcNAc...) asparagine). The active-site Charge relay system is the Asp479. The N-linked (GlcNAc...) asparagine glycan is linked to Asn490. Residue 547 to 550 (RYRR) coordinates heparin. The active-site Charge relay system is Ser574.

This sequence belongs to the peptidase S1 family. Plasma kallikrein subfamily. Homodimer; disulfide-linked. After activation the heavy and light chains are also linked by a disulfide bond. Interacts (activated) with F9 (inactive and activated) in calcium-dependent manner. Forms a heterodimer with SERPINA5. Post-translationally, activated by factor XIIa (or XII), which cleaves each polypeptide after Arg-389 into the light chain, which contains the active site, and the heavy chain, which associates with high molecular weight (HMW) kininogen. Activated by F12 (activated); the presence of negatively charged surfaces accelerates activation. Activated by F2 (thrombin); the presence of negatively charged surfaces, such as polyphosphate and dextran sulfate, strongly accelerates activation. Autoactivated; the presence of negatively charged surfaces, such as polyphosphate and dextran sulfate, accelerates autoactivation and autolysis. N-glycosylated on both chains. N-glycosylated sites mainly consist of nonfucosylated sialylated biantennary (in high abundance) and/or triantennary (in low abundance) complex structures.

The protein resides in the secreted. It carries out the reaction Selective cleavage of Arg-|-Ala and Arg-|-Val bonds in factor IX to form factor IXa.. With respect to regulation, inhibited by SERPINA5. In terms of biological role, factor XI triggers the middle phase of the intrinsic pathway of blood coagulation by activating factor IX. The polypeptide is Coagulation factor XI (F11) (Mus musculus (Mouse)).